A 167-amino-acid polypeptide reads, in one-letter code: Alanine- and arginine-rich domain-containing protein (167 aa).

Residues 140-167 form a disordered region; that stretch reads LKKRQDQELASKPQSPQDKEMNSECGSA.

Preferentially expressed in testis both in embryo and adult. Expressed at much lower level in other tissues.

This is Alanine- and arginine-rich domain-containing protein (Aard) from Mus musculus (Mouse).